Reading from the N-terminus, the 360-residue chain is S-adenosylmethionine:tRNA ribosyltransferase-isomerase (360 aa).

The protein belongs to the QueA family. As to quaternary structure, monomer.

It localises to the cytoplasm. The enzyme catalyses 7-aminomethyl-7-carbaguanosine(34) in tRNA + S-adenosyl-L-methionine = epoxyqueuosine(34) in tRNA + adenine + L-methionine + 2 H(+). The protein operates within tRNA modification; tRNA-queuosine biosynthesis. Its function is as follows. Transfers and isomerizes the ribose moiety from AdoMet to the 7-aminomethyl group of 7-deazaguanine (preQ1-tRNA) to give epoxyqueuosine (oQ-tRNA). The sequence is that of S-adenosylmethionine:tRNA ribosyltransferase-isomerase from Rhodopseudomonas palustris (strain TIE-1).